A 28-amino-acid chain; its full sequence is Cyclotide vodo I3 (28 aa).

3 cysteine pairs are disulfide-bonded: Cys-4–Cys-18, Cys-8–Cys-20, and Cys-13–Cys-25.

In terms of processing, this is a cyclic peptide. Contains 3 disulfide bonds.

Functionally, probably participates in a plant defense mechanism. This Viola odorata (Sweet violet) protein is Cyclotide vodo I3.